We begin with the raw amino-acid sequence, 147 residues long: D-aminoacyl-tRNA deacylase (147 aa).

A Gly-cisPro motif, important for rejection of L-amino acids motif is present at residues 136–137 (GP).

This sequence belongs to the DTD family. Homodimer.

The protein localises to the cytoplasm. It catalyses the reaction glycyl-tRNA(Ala) + H2O = tRNA(Ala) + glycine + H(+). The catalysed reaction is a D-aminoacyl-tRNA + H2O = a tRNA + a D-alpha-amino acid + H(+). Its function is as follows. An aminoacyl-tRNA editing enzyme that deacylates mischarged D-aminoacyl-tRNAs. Also deacylates mischarged glycyl-tRNA(Ala), protecting cells against glycine mischarging by AlaRS. Acts via tRNA-based rather than protein-based catalysis; rejects L-amino acids rather than detecting D-amino acids in the active site. By recycling D-aminoacyl-tRNA to D-amino acids and free tRNA molecules, this enzyme counteracts the toxicity associated with the formation of D-aminoacyl-tRNA entities in vivo and helps enforce protein L-homochirality. The protein is D-aminoacyl-tRNA deacylase of Streptococcus uberis (strain ATCC BAA-854 / 0140J).